Consider the following 149-residue polypeptide: Oligosaccharyltransferase complex subunit OSTC (149 aa).

The Cytoplasmic portion of the chain corresponds to 1-32; that stretch reads METLFRLPFAVLECPNIKLKRPGWVHMPSAMT. A helical transmembrane segment spans residues 33–53; the sequence is VYALVVVSYFLITGGIIYDVI. The Extracellular portion of the chain corresponds to 54–83; sequence VEPPSVGSMTDEHGHQRPVAFLAYRVNGQY. The helical transmembrane segment at 84-104 threads the bilayer; it reads IMEGLASSFLFTMGGLGFIIL. The Cytoplasmic segment spans residues 105-117; the sequence is DRSNAPNIPKLNR. Residues 118–138 form a helical membrane-spanning segment; that stretch reads FLLLFIGFVSVLLSFFMARVF. Residues 139 to 149 lie on the Extracellular side of the membrane; sequence MRMKLPGYLMG.

It belongs to the OSTC family. As to quaternary structure, specific component of the STT3A-containing form of the oligosaccharyltransferase (OST) complex.

The protein resides in the membrane. The protein operates within protein modification; protein glycosylation. Specific component of the STT3A-containing form of the oligosaccharyl transferase (OST) complex that catalyzes the initial transfer of a defined glycan (Glc(3)Man(9)GlcNAc(2) in eukaryotes) from the lipid carrier dolichol-pyrophosphate to an asparagine residue within an Asn-X-Ser/Thr consensus motif in nascent polypeptide chains, the first step in protein N-glycosylation. N-glycosylation occurs cotranslationally and the complex associates with the Sec61 complex at the channel-forming translocon complex that mediates protein translocation across the endoplasmic reticulum (ER). All subunits are required for a maximal enzyme activity. In Gallus gallus (Chicken), this protein is Oligosaccharyltransferase complex subunit OSTC.